We begin with the raw amino-acid sequence, 180 residues long: Putative manganese efflux pump MntP (180 aa).

Transmembrane regions (helical) follow at residues 6–26 (LMAL…GIGL), 34–54 (ILQI…TGWL), 67–87 (AAVI…WAAW), 102–122 (FWGL…AGFT), 131–151 (LLAA…GLVF), and 160–180 (GERA…KLFF).

Belongs to the MntP (TC 9.B.29) family.

It localises to the cell membrane. In terms of biological role, probably functions as a manganese efflux pump. The sequence is that of Putative manganese efflux pump MntP from Pelotomaculum thermopropionicum (strain DSM 13744 / JCM 10971 / SI).